The primary structure comprises 127 residues: Small ribosomal subunit protein uS13 (127 aa).

The segment at 97–127 (PVRGQRTKTNARTRKGPRKTVAGKKGVKDLR) is disordered. Positions 101–118 (QRTKTNARTRKGPRKTVA) are enriched in basic residues.

This sequence belongs to the universal ribosomal protein uS13 family. Part of the 30S ribosomal subunit. Forms a loose heterodimer with protein S19. Forms two bridges to the 50S subunit in the 70S ribosome.

Functionally, located at the top of the head of the 30S subunit, it contacts several helices of the 16S rRNA. In the 70S ribosome it contacts the 23S rRNA (bridge B1a) and protein L5 of the 50S subunit (bridge B1b), connecting the 2 subunits; these bridges are implicated in subunit movement. Contacts the tRNAs in the A and P-sites. The polypeptide is Small ribosomal subunit protein uS13 (Rhodopirellula baltica (strain DSM 10527 / NCIMB 13988 / SH1)).